The primary structure comprises 338 residues: Probable tRNA pseudouridine synthase B (338 aa).

Residue Asp78 is the Nucleophile of the active site. Residues Leu245–Met320 enclose the PUA domain.

Belongs to the pseudouridine synthase TruB family. Type 2 subfamily.

It catalyses the reaction uridine(55) in tRNA = pseudouridine(55) in tRNA. Its function is as follows. Could be responsible for synthesis of pseudouridine from uracil-55 in the psi GC loop of transfer RNAs. The chain is Probable tRNA pseudouridine synthase B from Methanosarcina barkeri (strain Fusaro / DSM 804).